Here is a 208-residue protein sequence, read N- to C-terminus: ATP synthase subunit b (208 aa).

An N-terminal signal peptide occupies residues 1–27; that stretch reads MVKAKKLVFKWSLLVFSFFTLSLFLVS. Cys28 carries N-palmitoyl cysteine lipidation. Cys28 is lipidated: S-diacylglycerol cysteine. A helical membrane pass occupies residues 49–69; it reads WVFITHLLAFFILLTLMIFLF.

It belongs to the ATPase B chain family. F-type ATPases have 2 components, F(1) - the catalytic core - and F(0) - the membrane proton channel. F(1) has five subunits: alpha(3), beta(3), gamma(1), delta(1), epsilon(1). F(0) has three main subunits: a(1), b(2) and c(10-14). The alpha and beta chains form an alternating ring which encloses part of the gamma chain. F(1) is attached to F(0) by a central stalk formed by the gamma and epsilon chains, while a peripheral stalk is formed by the delta and b chains.

Its subcellular location is the cell membrane. Functionally, f(1)F(0) ATP synthase produces ATP from ADP in the presence of a proton or sodium gradient. F-type ATPases consist of two structural domains, F(1) containing the extramembraneous catalytic core and F(0) containing the membrane proton channel, linked together by a central stalk and a peripheral stalk. During catalysis, ATP synthesis in the catalytic domain of F(1) is coupled via a rotary mechanism of the central stalk subunits to proton translocation. In terms of biological role, component of the F(0) channel, it forms part of the peripheral stalk, linking F(1) to F(0). The protein is ATP synthase subunit b of Mycoplasma genitalium (strain ATCC 33530 / DSM 19775 / NCTC 10195 / G37) (Mycoplasmoides genitalium).